The sequence spans 161 residues: MATAYHNLSDYDYESVPCGKDLRIGIAVAEWNHNITEPLMKGAIDTLLEHGVSADNIIVQHVPGTFELTYASAYLAEQHEVDAVIAIGCVVRGDTPHFDYICQGVTQGITQLNVDGFVPVIFGVLTTETMLQAEERAGGKHGNKGTEAAVTALKMAGLERI.

5-amino-6-(D-ribitylamino)uracil is bound by residues Trp-31, Thr-65–Glu-67, and Cys-89–Val-91. Residue Asp-94–Thr-95 coordinates (2S)-2-hydroxy-3-oxobutyl phosphate. The active-site Proton donor is the His-97. 5-amino-6-(D-ribitylamino)uracil is bound at residue Phe-122. A (2S)-2-hydroxy-3-oxobutyl phosphate-binding site is contributed by Arg-136.

Belongs to the DMRL synthase family.

The catalysed reaction is (2S)-2-hydroxy-3-oxobutyl phosphate + 5-amino-6-(D-ribitylamino)uracil = 6,7-dimethyl-8-(1-D-ribityl)lumazine + phosphate + 2 H2O + H(+). It functions in the pathway cofactor biosynthesis; riboflavin biosynthesis; riboflavin from 2-hydroxy-3-oxobutyl phosphate and 5-amino-6-(D-ribitylamino)uracil: step 1/2. Functionally, catalyzes the formation of 6,7-dimethyl-8-ribityllumazine by condensation of 5-amino-6-(D-ribitylamino)uracil with 3,4-dihydroxy-2-butanone 4-phosphate. This is the penultimate step in the biosynthesis of riboflavin. This Porphyromonas gingivalis (strain ATCC 33277 / DSM 20709 / CIP 103683 / JCM 12257 / NCTC 11834 / 2561) protein is 6,7-dimethyl-8-ribityllumazine synthase.